A 59-amino-acid polypeptide reads, in one-letter code: Large ribosomal subunit protein uL30 (59 aa).

It belongs to the universal ribosomal protein uL30 family. As to quaternary structure, part of the 50S ribosomal subunit.

The sequence is that of Large ribosomal subunit protein uL30 from Bacillus licheniformis (strain ATCC 14580 / DSM 13 / JCM 2505 / CCUG 7422 / NBRC 12200 / NCIMB 9375 / NCTC 10341 / NRRL NRS-1264 / Gibson 46).